Consider the following 418-residue polypeptide: Putative ion-transport protein YfeO (418 aa).

12 helical membrane-spanning segments follow: residues 10–30 (LLLS…LIVV), 54–74 (DSPI…GLVI), 99–119 (ALPG…SLGP), 120–140 (EHPI…RLLP), 149–169 (ILAS…AALI), 186–206 (LFAP…FFHP), 223–243 (ILSG…AVWC), 258–278 (VLVL…GGPV), 300–320 (DYFL…ASGF), 322–342 (GGRI…LHEH), 343–363 (VPAV…VLVV), and 371–391 (LFMA…CIVM).

The protein belongs to the chloride channel (TC 2.A.49) family.

It is found in the cell membrane. This chain is Putative ion-transport protein YfeO, found in Shigella sonnei (strain Ss046).